The primary structure comprises 792 residues: MITEEAFPVEPWQIRETRLDLNLLAQSESLFALSNGHIGLRGNLDEGEPYGLPGTYLNSFYEIRPLPYAEAGYGYPEAGQTVVDVTNGKILRLFVEDEPFDVRYGEVIFHERVLDLCAGTLTRRANWRSPADKQVKVVSTRLVSLAHRSVAAIEYVVEALDKFVRVTVQSELVSNEDQPETSGDPRVSAILDNPLEAVEHEATERGGLLMHRTRASSLMMAAGMDHEVEVPGRVEITTDARPDLARTTVICGLRPGQKLRIVKYLAYGWSSLRSRPALHDQATAALHTARYSGWQGLLDAQRAYLNEFWDSADVEVEGDPESQQAVRFGLFHLLQASARAERRAIPSKGLTGTGYDGHAFWDTEGFVLPVLTYTAPHAVADALRWRASTLQLAKDRAAELGLDGASFCWRTIRGQECSAYWPAGTAAWHINADIAMAFERYRIVTGDHSLEEECGLAVLIETARLWLSLGHHDRHGVWHLDGVTGPDEYTAVVRDNVFTNLMAASNLITAADACLRQPEAAKAMGVTTEEMAAWRDAADAANIPYDDELGVHQQCEGFTTFAEWDFEANTTYPLFLHEAYVRLYPAQVIKQADLVLAMQWQSHAFTPEQKARNVDYYERRMVRDSSLSACTQAVMCAEVGHLELAHDYAYEAALIDLRDLHRNTRDGLHMASLAGAWTALVGGFGGLRDDEGILSIDPQLPHGISRLRFRLRWRGFRLTVDARHADVTYTLRDGPGGELTIRHAGEHLTLKSDSPSTIAVRDRKPLLPPPSQPPGREPVSRRHKSLIISAAR.

361 to 362 (WD) lines the substrate pocket. The active-site Proton donor is E488. Residue 590-591 (KQ) participates in substrate binding. The disordered stretch occupies residues 753–792 (DSPSTIAVRDRKPLLPPPSQPPGREPVSRRHKSLIISAAR). Over residues 766-776 (LLPPPSQPPGR) the composition is skewed to pro residues.

The protein belongs to the glycosyl hydrolase 65 family.

This is an uncharacterized protein from Mycobacterium leprae (strain TN).